The primary structure comprises 206 residues: Thiamine-phosphate synthase (206 aa).

Residues Gln-39 to Lys-43 and Asn-74 each bind 4-amino-2-methyl-5-(diphosphooxymethyl)pyrimidine. Mg(2+) is bound by residues Asp-75 and Asp-94. Ser-112 contributes to the 4-amino-2-methyl-5-(diphosphooxymethyl)pyrimidine binding site. Thr-138–Thr-140 contributes to the 2-[(2R,5Z)-2-carboxy-4-methylthiazol-5(2H)-ylidene]ethyl phosphate binding site. 4-amino-2-methyl-5-(diphosphooxymethyl)pyrimidine is bound at residue Lys-141. 2-[(2R,5Z)-2-carboxy-4-methylthiazol-5(2H)-ylidene]ethyl phosphate-binding positions include Gly-170 and Ile-190 to Ser-191.

The protein belongs to the thiamine-phosphate synthase family. Mg(2+) is required as a cofactor.

The enzyme catalyses 2-[(2R,5Z)-2-carboxy-4-methylthiazol-5(2H)-ylidene]ethyl phosphate + 4-amino-2-methyl-5-(diphosphooxymethyl)pyrimidine + 2 H(+) = thiamine phosphate + CO2 + diphosphate. It catalyses the reaction 2-(2-carboxy-4-methylthiazol-5-yl)ethyl phosphate + 4-amino-2-methyl-5-(diphosphooxymethyl)pyrimidine + 2 H(+) = thiamine phosphate + CO2 + diphosphate. It carries out the reaction 4-methyl-5-(2-phosphooxyethyl)-thiazole + 4-amino-2-methyl-5-(diphosphooxymethyl)pyrimidine + H(+) = thiamine phosphate + diphosphate. It participates in cofactor biosynthesis; thiamine diphosphate biosynthesis; thiamine phosphate from 4-amino-2-methyl-5-diphosphomethylpyrimidine and 4-methyl-5-(2-phosphoethyl)-thiazole: step 1/1. Its function is as follows. Condenses 4-methyl-5-(beta-hydroxyethyl)thiazole monophosphate (THZ-P) and 2-methyl-4-amino-5-hydroxymethyl pyrimidine pyrophosphate (HMP-PP) to form thiamine monophosphate (TMP). The polypeptide is Thiamine-phosphate synthase (Oceanobacillus iheyensis (strain DSM 14371 / CIP 107618 / JCM 11309 / KCTC 3954 / HTE831)).